The chain runs to 329 residues: Myoblast determination protein 1 homolog (329 aa).

Positions 160–211 constitute a bHLH domain; it reads DRRKAATMRERRRLRKVNEAFEVVKQRTCPNPNQRLPKVEILRSAIDYINTL. Residues 256 to 279 are disordered; it reads NPDGPNVYDDEDLSDTDEDRDHHH. Over residues 263–273 the composition is skewed to acidic residues; sequence YDDEDLSDTDE.

As to quaternary structure, efficient DNA binding requires dimerization with another bHLH protein. Body wall muscle cells; in clonal muscle precursors, in a set of early embryonic blastomeres (the ms-granddaughters), and in six glial-like cells called GLRS.

The protein localises to the nucleus. In terms of biological role, accumulation defines the body wall muscle cell fate during embryogenesis. The sequence is that of Myoblast determination protein 1 homolog (hlh-1) from Caenorhabditis briggsae.